We begin with the raw amino-acid sequence, 360 residues long: Phosphoserine aminotransferase (360 aa).

Arg41 is a binding site for L-glutamate. Pyridoxal 5'-phosphate contacts are provided by Trp101, Thr152, Asp172, and Gln195. An N6-(pyridoxal phosphate)lysine modification is found at Lys196. Asn237–Thr238 contacts pyridoxal 5'-phosphate.

It belongs to the class-V pyridoxal-phosphate-dependent aminotransferase family. SerC subfamily. In terms of assembly, homodimer. The cofactor is pyridoxal 5'-phosphate.

Its subcellular location is the cytoplasm. The catalysed reaction is O-phospho-L-serine + 2-oxoglutarate = 3-phosphooxypyruvate + L-glutamate. It carries out the reaction 4-(phosphooxy)-L-threonine + 2-oxoglutarate = (R)-3-hydroxy-2-oxo-4-phosphooxybutanoate + L-glutamate. Its pathway is amino-acid biosynthesis; L-serine biosynthesis; L-serine from 3-phospho-D-glycerate: step 2/3. It participates in cofactor biosynthesis; pyridoxine 5'-phosphate biosynthesis; pyridoxine 5'-phosphate from D-erythrose 4-phosphate: step 3/5. Catalyzes the reversible conversion of 3-phosphohydroxypyruvate to phosphoserine and of 3-hydroxy-2-oxo-4-phosphonooxybutanoate to phosphohydroxythreonine. This Burkholderia orbicola (strain MC0-3) protein is Phosphoserine aminotransferase.